A 694-amino-acid chain; its full sequence is Elongation factor G (694 aa).

One can recognise a tr-type G domain in the interval Glu8–Thr287. GTP-binding positions include Ala17–Thr24, Asp86–His90, and Asn140–Asp143.

This sequence belongs to the TRAFAC class translation factor GTPase superfamily. Classic translation factor GTPase family. EF-G/EF-2 subfamily.

Its subcellular location is the cytoplasm. Its function is as follows. Catalyzes the GTP-dependent ribosomal translocation step during translation elongation. During this step, the ribosome changes from the pre-translocational (PRE) to the post-translocational (POST) state as the newly formed A-site-bound peptidyl-tRNA and P-site-bound deacylated tRNA move to the P and E sites, respectively. Catalyzes the coordinated movement of the two tRNA molecules, the mRNA and conformational changes in the ribosome. This is Elongation factor G from Brucella melitensis biotype 2 (strain ATCC 23457).